Reading from the N-terminus, the 61-residue chain is Small ribosomal subunit protein uS14B (61 aa).

4 residues coordinate Zn(2+): C24, C27, C40, and C43.

Belongs to the universal ribosomal protein uS14 family. Zinc-binding uS14 subfamily. As to quaternary structure, part of the 30S ribosomal subunit. Contacts proteins S3 and S10. Zn(2+) serves as cofactor.

Functionally, binds 16S rRNA, required for the assembly of 30S particles and may also be responsible for determining the conformation of the 16S rRNA at the A site. This Lactococcus lactis subsp. lactis (strain IL1403) (Streptococcus lactis) protein is Small ribosomal subunit protein uS14B.